The chain runs to 103 residues: Putative double-stranded DNA mimic protein HD_0986 (103 aa).

This sequence belongs to the putative dsDNA mimic protein family.

In terms of biological role, may act as a double-stranded DNA (dsDNA) mimic. Probably regulates the activity of a dsDNA-binding protein. In Haemophilus ducreyi (strain 35000HP / ATCC 700724), this protein is Putative double-stranded DNA mimic protein HD_0986.